A 370-amino-acid chain; its full sequence is Aminomethyltransferase (370 aa).

The protein belongs to the GcvT family. In terms of assembly, the glycine cleavage system is composed of four proteins: P, T, L and H.

It carries out the reaction N(6)-[(R)-S(8)-aminomethyldihydrolipoyl]-L-lysyl-[protein] + (6S)-5,6,7,8-tetrahydrofolate = N(6)-[(R)-dihydrolipoyl]-L-lysyl-[protein] + (6R)-5,10-methylene-5,6,7,8-tetrahydrofolate + NH4(+). Its function is as follows. The glycine cleavage system catalyzes the degradation of glycine. In Leptospira biflexa serovar Patoc (strain Patoc 1 / Ames), this protein is Aminomethyltransferase.